Here is a 117-residue protein sequence, read N- to C-terminus: Large ribosomal subunit protein bL19 (117 aa).

It belongs to the bacterial ribosomal protein bL19 family.

In terms of biological role, this protein is located at the 30S-50S ribosomal subunit interface and may play a role in the structure and function of the aminoacyl-tRNA binding site. This chain is Large ribosomal subunit protein bL19, found in Halorhodospira halophila (strain DSM 244 / SL1) (Ectothiorhodospira halophila (strain DSM 244 / SL1)).